A 147-amino-acid polypeptide reads, in one-letter code: Ubiquitin-conjugating enzyme E2-16 kDa (147 aa).

Residues 1-147 (MALKRINKEL…AREWTRKYAI (147 aa)) enclose the UBC core domain. The active-site Glycyl thioester intermediate is the Cys107.

Belongs to the ubiquitin-conjugating enzyme family.

The enzyme catalyses S-ubiquitinyl-[E1 ubiquitin-activating enzyme]-L-cysteine + [E2 ubiquitin-conjugating enzyme]-L-cysteine = [E1 ubiquitin-activating enzyme]-L-cysteine + S-ubiquitinyl-[E2 ubiquitin-conjugating enzyme]-L-cysteine.. It functions in the pathway protein modification; protein ubiquitination. Catalyzes the covalent attachment of ubiquitin to other proteins. The protein is Ubiquitin-conjugating enzyme E2-16 kDa (UBC1) of Pyricularia oryzae (strain 70-15 / ATCC MYA-4617 / FGSC 8958) (Rice blast fungus).